We begin with the raw amino-acid sequence, 278 residues long: HTH-type transcriptional regulator HdfR (278 aa).

In terms of domain architecture, HTH lysR-type spans 1–58; it reads MDTELLKTFLEVSRTRHFGRAAEALYLTQSAVSFRIRQLENQLGVNLFTRHRNNIRLT. The segment at residues 18–37 is a DNA-binding region (H-T-H motif); the sequence is FGRAAEALYLTQSAVSFRIR.

The protein belongs to the LysR transcriptional regulatory family.

Functionally, negatively regulates the transcription of the flagellar master operon flhDC by binding to the upstream region of the operon. The polypeptide is HTH-type transcriptional regulator HdfR (Salmonella agona (strain SL483)).